The sequence spans 507 residues: Histidine ammonia-lyase (507 aa).

Positions 141–143 form a cross-link, 5-imidazolinone (Ala-Gly); the sequence is ASG. Ser142 is modified (2,3-didehydroalanine (Ser)).

This sequence belongs to the PAL/histidase family. Contains an active site 4-methylidene-imidazol-5-one (MIO), which is formed autocatalytically by cyclization and dehydration of residues Ala-Ser-Gly.

Its subcellular location is the cytoplasm. It carries out the reaction L-histidine = trans-urocanate + NH4(+). It participates in amino-acid degradation; L-histidine degradation into L-glutamate; N-formimidoyl-L-glutamate from L-histidine: step 1/3. The protein is Histidine ammonia-lyase of Burkholderia vietnamiensis (strain G4 / LMG 22486) (Burkholderia cepacia (strain R1808)).